The primary structure comprises 339 residues: Type IV secretion system protein PtlH homolog (339 aa).

This sequence belongs to the GSP E family.

The protein is Type IV secretion system protein PtlH homolog (ptlH) of Bordetella bronchiseptica (strain ATCC BAA-588 / NCTC 13252 / RB50) (Alcaligenes bronchisepticus).